A 324-amino-acid polypeptide reads, in one-letter code: Biotin synthase (324 aa).

The 228-residue stretch at 37–264 folds into the Radical SAM core domain; sequence NEVQVAALMN…ASYVRLAAGR (228 aa). [4Fe-4S] cluster-binding residues include C52, C56, and C59. Residues C96, C127, C187, and R259 each coordinate [2Fe-2S] cluster.

It belongs to the radical SAM superfamily. Biotin synthase family. Homodimer. The cofactor is [4Fe-4S] cluster. Requires [2Fe-2S] cluster as cofactor.

The catalysed reaction is (4R,5S)-dethiobiotin + (sulfur carrier)-SH + 2 reduced [2Fe-2S]-[ferredoxin] + 2 S-adenosyl-L-methionine = (sulfur carrier)-H + biotin + 2 5'-deoxyadenosine + 2 L-methionine + 2 oxidized [2Fe-2S]-[ferredoxin]. It participates in cofactor biosynthesis; biotin biosynthesis; biotin from 7,8-diaminononanoate: step 2/2. In terms of biological role, catalyzes the conversion of dethiobiotin (DTB) to biotin by the insertion of a sulfur atom into dethiobiotin via a radical-based mechanism. The polypeptide is Biotin synthase (Anaplasma marginale (strain Florida)).